Consider the following 88-residue polypeptide: CRISPR-associated endoribonuclease Cas2 2 (88 aa).

Aspartate 8 lines the Mg(2+) pocket.

The protein belongs to the CRISPR-associated endoribonuclease Cas2 protein family. As to quaternary structure, homodimer, forms a heterotetramer with a Cas1 homodimer. Mg(2+) serves as cofactor.

In terms of biological role, CRISPR (clustered regularly interspaced short palindromic repeat), is an adaptive immune system that provides protection against mobile genetic elements (viruses, transposable elements and conjugative plasmids). CRISPR clusters contain sequences complementary to antecedent mobile elements and target invading nucleic acids. CRISPR clusters are transcribed and processed into CRISPR RNA (crRNA). Functions as a ssRNA-specific endoribonuclease. Involved in the integration of spacer DNA into the CRISPR cassette. The chain is CRISPR-associated endoribonuclease Cas2 2 (cas22) from Saccharolobus solfataricus (strain ATCC 35092 / DSM 1617 / JCM 11322 / P2) (Sulfolobus solfataricus).